The sequence spans 410 residues: Lysosome-associated membrane glycoprotein 2 (410 aa).

Positions 1-28 (MMCFRLSPVSGSGLVLSCLLLGAVQSYA) are cleaved as a signal peptide. The tract at residues 29–192 (FELNLPDSKA…SKEEFVCEED (164 aa)) is first lumenal domain. The Lumenal segment spans residues 29 to 375 (FELNLPDSKA…QDCSADEDNF (347 aa)). A disulfide bridge connects residues C40 and C79. N-linked (GlcNAc...) asparagine glycosylation is found at N48, N58, N71, N75, N99, N119, N123, N179, N222, N229, N242, N260, N275, N300, N307, N317, and N356. A disulfide bond links C153 and C189. Residues 193 to 228 (KSVTTVRPIIHTTVPPPTTTPTPLPPKVGNYSVSNG) form a hinge region. The interval 229–375 (NATCLLATMG…QDCSADEDNF (147 aa)) is second lumenal domain. A disulfide bridge connects residues C232 and C265. C331 and C368 are joined by a disulfide. Residues 376-399 (LVPIAVGAALAGVLALVLLAYFIG) traverse the membrane as a helical segment. Over 400–410 (LKRHHTGYEQF) the chain is Cytoplasmic. Positions 401 to 404 (KRHH) are important for binding and subsequent lysosomal degradation of target proteins.

This sequence belongs to the LAMP family. In terms of assembly, monomer. Forms large homooligomers. Interacts (via its cytoplasmic region) with HSPA8; HSPA8 mediates recruitment of proteins with a KFERQ motif to the surface of the lysosome for chaperone-mediated autophagy. Interacts with HSP90 in the lysosome lumen; this enhances LAMP2 stability. Interacts with MLLT11. Interacts with ABCB9. Interacts with FURIN. Interacts with CT55; this interaction may be important for LAMP2 protein stability. Interacts with TMEM175; inhibiting the proton channel activity of TMEM175. Forms a ternary complex with RAB7A and RUFY4 (via RUN domain); the interaction with RAB7A is mediated by RUFY4 (via RUN and coiled coil domains). In terms of processing, extensively N-glycosylated. Contains a minor proportion of O-linked glycans.

Its subcellular location is the lysosome membrane. The protein resides in the endosome membrane. It is found in the cell membrane. The protein localises to the cytoplasmic vesicle. It localises to the autophagosome membrane. Its function is as follows. Lysosomal membrane glycoprotein which plays an important role in lysosome biogenesis, lysosomal pH regulation and autophagy. Acts as an important regulator of lysosomal lumen pH regulation by acting as a direct inhibitor of the proton channel TMEM175, facilitating lysosomal acidification for optimal hydrolase activity. Plays an important role in chaperone-mediated autophagy, a process that mediates lysosomal degradation of proteins in response to various stresses and as part of the normal turnover of proteins with a long biological half-live. Functions by binding target proteins, such as GAPDH, NLRP3 and MLLT11, and targeting them for lysosomal degradation. In the chaperone-mediated autophagy, acts downstream of chaperones, such as HSPA8/HSC70, which recognize and bind substrate proteins and mediate their recruitment to lysosomes, where target proteins bind LAMP2. Plays a role in lysosomal protein degradation in response to starvation. Required for the fusion of autophagosomes with lysosomes during autophagy. Cells that lack LAMP2 express normal levels of VAMP8, but fail to accumulate STX17 on autophagosomes, which is the most likely explanation for the lack of fusion between autophagosomes and lysosomes. Required for normal degradation of the contents of autophagosomes. Required for efficient MHC class II-mediated presentation of exogenous antigens via its function in lysosomal protein degradation; antigenic peptides generated by proteases in the endosomal/lysosomal compartment are captured by nascent MHC II subunits. Is not required for efficient MHC class II-mediated presentation of endogenous antigens. This chain is Lysosome-associated membrane glycoprotein 2 (LAMP2), found in Cricetulus griseus (Chinese hamster).